Here is a 448-residue protein sequence, read N- to C-terminus: Phosphoglucosamine mutase (448 aa).

S100 (phosphoserine intermediate) is an active-site residue. Positions 100, 240, 242, and 244 each coordinate Mg(2+). S100 carries the phosphoserine modification.

The protein belongs to the phosphohexose mutase family. The cofactor is Mg(2+). Activated by phosphorylation.

It catalyses the reaction alpha-D-glucosamine 1-phosphate = D-glucosamine 6-phosphate. Functionally, catalyzes the conversion of glucosamine-6-phosphate to glucosamine-1-phosphate. The protein is Phosphoglucosamine mutase of Clostridium tetani (strain Massachusetts / E88).